The chain runs to 317 residues: MAASVARVLKAAGGRQLLLMVARRRPVLRQPFLLMPRKFWGTSALRSEDQKQPPFSSTSAHAGTPEHAEEQYQQQQPPPRYTDQAGEESEGYESEEQLQQRILSAALQFVPDFGWSADAIAEGAKSLDMSAAAAGMFEDGGSELVLHFVTQCNSQLTELLEEEQKLVQLGTSEKKPTTQFLRDAVEARLRMHIPYIEQWPQALGMLLLPRNIPSSLKLLTAMVDDIWHYAGDQSTDVSWYTRRAVLTGIYNTTELVMLQDSSPDFEDTWKFLENRISEAMTMGTSVKQVASTGEAVIQGLMGAAVTLKNLTGLNQRR.

A mitochondrion-targeting transit peptide spans 1–46 (MAASVARVLKAAGGRQLLLMVARRRPVLRQPFLLMPRKFWGTSALR). The disordered stretch occupies residues 45 to 97 (LRSEDQKQPPFSSTSAHAGTPEHAEEQYQQQQPPPRYTDQAGEESEGYESEEQ). The segment covering 85 to 96 (AGEESEGYESEE) has biased composition (acidic residues). A 1,2-diacylglycero-3-phosphoethanolamine is bound at residue Arg243.

This sequence belongs to the COQ9 family. In terms of assembly, homodimer. Heterodimer; two heterodimers of COQ7:COQ9 come together on the same side of the lipid pseudo-bilayer and form a curved tetramer with a hydrophobic surface suitable for membrane interaction. These two tetramers assemble into a soluble octamer with a pseudo-bilayer of lipids captured within. Interacts with COQ7; this interaction allows ubiquinone (CoQ) isoprene intermediates presentation to COQ7 and facilitates the COQ7-mediated hydroxylase step.

The protein resides in the mitochondrion. Its pathway is cofactor biosynthesis; ubiquinone biosynthesis. In terms of biological role, membrane-associated protein that warps the membrane surface to access and bind aromatic isoprenes with high specificity, including ubiquinone (CoQ) isoprene intermediates and presents them directly to COQ7, therefore facilitating the COQ7-mediated hydroxylase step. Participates in the biosynthesis of coenzyme Q, also named ubiquinone, an essential lipid-soluble electron transporter for aerobic cellular respiration. The sequence is that of Ubiquinone biosynthesis protein COQ9, mitochondrial from Xenopus tropicalis (Western clawed frog).